The following is a 289-amino-acid chain: Acetyl-coenzyme A carboxylase carboxyl transferase subunit beta (289 aa).

The CoA carboxyltransferase N-terminal domain maps to 34–289 (MWVKCNKCGE…KLINMHQNSF (256 aa)). 4 residues coordinate Zn(2+): C38, C41, C57, and C60. The segment at 38–60 (CNKCGEILYQNDLEKNYMVCNLC) adopts a C4-type zinc-finger fold.

This sequence belongs to the AccD/PCCB family. As to quaternary structure, acetyl-CoA carboxylase is a heterohexamer composed of biotin carboxyl carrier protein (AccB), biotin carboxylase (AccC) and two subunits each of ACCase subunit alpha (AccA) and ACCase subunit beta (AccD). Zn(2+) serves as cofactor.

It localises to the cytoplasm. It catalyses the reaction N(6)-carboxybiotinyl-L-lysyl-[protein] + acetyl-CoA = N(6)-biotinyl-L-lysyl-[protein] + malonyl-CoA. It functions in the pathway lipid metabolism; malonyl-CoA biosynthesis; malonyl-CoA from acetyl-CoA: step 1/1. In terms of biological role, component of the acetyl coenzyme A carboxylase (ACC) complex. Biotin carboxylase (BC) catalyzes the carboxylation of biotin on its carrier protein (BCCP) and then the CO(2) group is transferred by the transcarboxylase to acetyl-CoA to form malonyl-CoA. The protein is Acetyl-coenzyme A carboxylase carboxyl transferase subunit beta of Clostridium botulinum (strain Kyoto / Type A2).